Reading from the N-terminus, the 525-residue chain is ATP synthase subunit alpha (525 aa).

Residue 169–176 (GDRQTGKT) coordinates ATP.

The protein belongs to the ATPase alpha/beta chains family. F-type ATPases have 2 components, CF(1) - the catalytic core - and CF(0) - the membrane proton channel. CF(1) has five subunits: alpha(3), beta(3), gamma(1), delta(1), epsilon(1). CF(0) has three main subunits: a(1), b(2) and c(9-12). The alpha and beta chains form an alternating ring which encloses part of the gamma chain. CF(1) is attached to CF(0) by a central stalk formed by the gamma and epsilon chains, while a peripheral stalk is formed by the delta and b chains.

Its subcellular location is the cell membrane. The enzyme catalyses ATP + H2O + 4 H(+)(in) = ADP + phosphate + 5 H(+)(out). Functionally, produces ATP from ADP in the presence of a proton gradient across the membrane. The alpha chain is a regulatory subunit. The polypeptide is ATP synthase subunit alpha (Mycoplasma capricolum subsp. capricolum (strain California kid / ATCC 27343 / NCTC 10154)).